We begin with the raw amino-acid sequence, 353 residues long: MTAILERRESESLWGRFCNWITSTENRLYIGWFGVLMIPTLLTATSVFIIAFIAAPPVDIDGIREPVSGSLLYGNNIISGAIIPTSAAIGLHFYPIWEAASVDEWLYNGGPYELIVLHFLLGVACYMGREWELSFRLGMRPWIAVAYSAPVAAATAVFLIYPIGQGSFSDGMPLGISGTFNFMIVFQAEHNILMHPFHMLGVAGVFGGSLFSAMHGSLVTSSLIRETTENESANEGYRFGQEEETYNIVAAHGYFGRLIFQYASFNNSRSLHFFLAAWPVVGIWFTALGISTMAFNLNGFNFNQSVVDSQGRVINTWADIINRANLGMEVMHERNAHNFPLDLAAVEVPSTNG.

N-acetylthreonine is present on Thr2. Thr2 is subject to Phosphothreonine. 3 helical membrane-spanning segments follow: residues 29-46, 118-133, and 142-156; these read YIGWFGVLMIPTLLTATS, HFLLGVACYMGREWEL, and WIAVAYSAPVAAATA. His118 lines the chlorophyll a pocket. Tyr126 serves as a coordination point for pheophytin a. Positions 170 and 189 each coordinate [CaMn4O5] cluster. A helical membrane pass occupies residues 197 to 218; sequence FHMLGVAGVFGGSLFSAMHGSL. Chlorophyll a is bound at residue His198. A quinone is bound by residues His215 and 264-265; that span reads SF. Position 215 (His215) interacts with Fe cation. Fe cation is bound at residue His272. Residues 274–288 form a helical membrane-spanning segment; the sequence is FLAAWPVVGIWFTAL. Residues His332, Glu333, Asp342, and Ala344 each coordinate [CaMn4O5] cluster. Positions 345–353 are excised as a propeptide; that stretch reads AVEVPSTNG.

Belongs to the reaction center PufL/M/PsbA/D family. As to quaternary structure, PSII is composed of 1 copy each of membrane proteins PsbA, PsbB, PsbC, PsbD, PsbE, PsbF, PsbH, PsbI, PsbJ, PsbK, PsbL, PsbM, PsbT, PsbX, PsbY, PsbZ, Psb30/Ycf12, at least 3 peripheral proteins of the oxygen-evolving complex and a large number of cofactors. It forms dimeric complexes. It depends on The D1/D2 heterodimer binds P680, chlorophylls that are the primary electron donor of PSII, and subsequent electron acceptors. It shares a non-heme iron and each subunit binds pheophytin, quinone, additional chlorophylls, carotenoids and lipids. D1 provides most of the ligands for the Mn4-Ca-O5 cluster of the oxygen-evolving complex (OEC). There is also a Cl(-1) ion associated with D1 and D2, which is required for oxygen evolution. The PSII complex binds additional chlorophylls, carotenoids and specific lipids. as a cofactor. Tyr-161 forms a radical intermediate that is referred to as redox-active TyrZ, YZ or Y-Z. Post-translationally, C-terminally processed by CTPA; processing is essential to allow assembly of the oxygen-evolving complex and thus photosynthetic growth.

The protein localises to the plastid. The protein resides in the chloroplast thylakoid membrane. It carries out the reaction 2 a plastoquinone + 4 hnu + 2 H2O = 2 a plastoquinol + O2. Functionally, photosystem II (PSII) is a light-driven water:plastoquinone oxidoreductase that uses light energy to abstract electrons from H(2)O, generating O(2) and a proton gradient subsequently used for ATP formation. It consists of a core antenna complex that captures photons, and an electron transfer chain that converts photonic excitation into a charge separation. The D1/D2 (PsbA/PsbD) reaction center heterodimer binds P680, the primary electron donor of PSII as well as several subsequent electron acceptors. This is Photosystem II protein D1 from Eucalyptus globulus subsp. globulus (Tasmanian blue gum).